The sequence spans 321 residues: ATP-dependent 6-phosphofructokinase (321 aa).

Glycine 12 lines the ATP pocket. ADP-binding positions include 22-26 and 55-60; these read RGVVR and RYSVSD. ATP contacts are provided by residues 73 to 74 and 103 to 106; these read RF and GDGS. Position 104 (aspartate 104) interacts with Mg(2+). 127–129 contacts substrate; sequence TID. Aspartate 129 functions as the Proton acceptor in the catalytic mechanism. Arginine 156 is a binding site for ADP. Residues arginine 164 and 171–173 contribute to the substrate site; that span reads MGR. ADP is bound by residues 187 to 189, arginine 213, and 215 to 217; these read GCE and KRH. Substrate is bound by residues glutamate 224, arginine 245, and 251 to 254; that span reads HIQR.

This sequence belongs to the phosphofructokinase type A (PFKA) family. ATP-dependent PFK group I subfamily. Prokaryotic clade 'B1' sub-subfamily. In terms of assembly, homotetramer. Requires Mg(2+) as cofactor.

Its subcellular location is the cytoplasm. The catalysed reaction is beta-D-fructose 6-phosphate + ATP = beta-D-fructose 1,6-bisphosphate + ADP + H(+). It functions in the pathway carbohydrate degradation; glycolysis; D-glyceraldehyde 3-phosphate and glycerone phosphate from D-glucose: step 3/4. Allosterically activated by ADP and other diphosphonucleosides, and allosterically inhibited by phosphoenolpyruvate. Its function is as follows. Catalyzes the phosphorylation of D-fructose 6-phosphate to fructose 1,6-bisphosphate by ATP, the first committing step of glycolysis. The polypeptide is ATP-dependent 6-phosphofructokinase (Haemophilus influenzae (strain PittEE)).